Consider the following 495-residue polypeptide: Trimethylamine methyltransferase MttB2 (495 aa).

Residue Pyl334 is a non-standard amino acid, pyrrolysine.

This sequence belongs to the trimethylamine methyltransferase family. Can form a complex with MttC.

It catalyses the reaction Co(I)-[trimethylamine-specific corrinoid protein] + trimethylamine + H(+) = methyl-Co(III)-[trimethylamine-specific corrinoid protein] + dimethylamine. The protein operates within one-carbon metabolism; methanogenesis from trimethylamine. Its function is as follows. Catalyzes the transfer of a methyl group from trimethylamine to the corrinoid cofactor of MttC. This Methanosarcina mazei (strain ATCC BAA-159 / DSM 3647 / Goe1 / Go1 / JCM 11833 / OCM 88) (Methanosarcina frisia) protein is Trimethylamine methyltransferase MttB2 (mttB2).